The primary structure comprises 74 residues: ATP synthase subunit c (74 aa).

The next 2 membrane-spanning stretches (helical) occupy residues 8–28 (FIGIGFMAIGMYGAALGVSNI) and 52–72 (IGAGLAEAMGLFAFVIAMLLI).

This sequence belongs to the ATPase C chain family. As to quaternary structure, F-type ATPases have 2 components, F(1) - the catalytic core - and F(0) - the membrane proton channel. F(1) has five subunits: alpha(3), beta(3), gamma(1), delta(1), epsilon(1). F(0) has three main subunits: a(1), b(2) and c(10-14). The alpha and beta chains form an alternating ring which encloses part of the gamma chain. F(1) is attached to F(0) by a central stalk formed by the gamma and epsilon chains, while a peripheral stalk is formed by the delta and b chains.

It localises to the cell inner membrane. Its function is as follows. F(1)F(0) ATP synthase produces ATP from ADP in the presence of a proton or sodium gradient. F-type ATPases consist of two structural domains, F(1) containing the extramembraneous catalytic core and F(0) containing the membrane proton channel, linked together by a central stalk and a peripheral stalk. During catalysis, ATP synthesis in the catalytic domain of F(1) is coupled via a rotary mechanism of the central stalk subunits to proton translocation. Functionally, key component of the F(0) channel; it plays a direct role in translocation across the membrane. A homomeric c-ring of between 10-14 subunits forms the central stalk rotor element with the F(1) delta and epsilon subunits. The polypeptide is ATP synthase subunit c (Rickettsia typhi (strain ATCC VR-144 / Wilmington)).